Here is a 250-residue protein sequence, read N- to C-terminus: 2,5-dichloro-2,5-cyclohexadiene-1,4-diol dehydrogenase LinX (250 aa).

7 residues coordinate NAD(+): Asp38, Asp64, Val65, Tyr156, Lys160, Thr191, and Thr194. The active-site Proton acceptor is the Tyr156.

This sequence belongs to the short-chain dehydrogenases/reductases (SDR) family.

The enzyme catalyses 2,5-dichlorocyclohexa-2,5-dien-1,4-diol + NAD(+) = 2,5-dichlorohydroquinone + NADH + H(+). In terms of biological role, catalyzes the degradation of 2,5-dichloro-2,5-cyclohexadiene-1,4-diol (2,5-DDOL) into 2,5-dichlorohydroquinone (2,5-DCHQ) in vitro. LinX appears not to be involved in gamma-hexachlorocyclohexane (gamma-HCH) degradation pathway, in contrast to LinC which has the same enzymatic activity. The sequence is that of 2,5-dichloro-2,5-cyclohexadiene-1,4-diol dehydrogenase LinX from Sphingobium indicum (strain DSM 16412 / CCM 7286 / MTCC 6364 / B90A).